Consider the following 246-residue polypeptide: Glandular kallikrein (246 aa).

The propeptide occupies 1 to 7; sequence APPIQSR. The region spanning 8 to 243 is the Peptidase S1 domain; the sequence is IIGGRECEKN…YLDWINDTIT (236 aa). 5 disulfides stabilise this stretch: cysteine 14–cysteine 158, cysteine 33–cysteine 49, cysteine 135–cysteine 204, cysteine 169–cysteine 183, and cysteine 194–cysteine 219. Histidine 48 (charge relay system) is an active-site residue. Asparagine 85 carries N-linked (GlcNAc...) asparagine glycosylation. A kallikrein (autolysis) loop region spans residues 85–104; the sequence is NLSLLKXHTKADGKDYSHDL. Aspartate 103 serves as the catalytic Charge relay system. Serine 198 functions as the Charge relay system in the catalytic mechanism. Asparagine 239 carries N-linked (GlcNAc...) asparagine glycosylation.

Belongs to the peptidase S1 family. Kallikrein subfamily. Monomer.

The enzyme catalyses Preferential cleavage of Arg-|-Xaa bonds in small molecule substrates. Highly selective action to release kallidin (lysyl-bradykinin) from kininogen involves hydrolysis of Met-|-Xaa or Leu-|-Xaa.. Functionally, glandular kallikreins cleave Met-Lys and Arg-Ser bonds in kininogen to release Lys-bradykinin. In Sus scrofa (Pig), this protein is Glandular kallikrein.